A 116-amino-acid polypeptide reads, in one-letter code: Phage-like element PBSX protein XkdD (116 aa).

The chain is Phage-like element PBSX protein XkdD (xkdD) from Bacillus subtilis (strain 168).